The chain runs to 159 residues: Cyclic pyranopterin monophosphate synthase (159 aa).

Substrate-binding positions include 75–77 and 113–114; these read LCH and ME. D128 is an active-site residue.

Belongs to the MoaC family. In terms of assembly, homohexamer; trimer of dimers.

It catalyses the reaction (8S)-3',8-cyclo-7,8-dihydroguanosine 5'-triphosphate = cyclic pyranopterin phosphate + diphosphate. The protein operates within cofactor biosynthesis; molybdopterin biosynthesis. In terms of biological role, catalyzes the conversion of (8S)-3',8-cyclo-7,8-dihydroguanosine 5'-triphosphate to cyclic pyranopterin monophosphate (cPMP). The sequence is that of Cyclic pyranopterin monophosphate synthase from Cupriavidus necator (strain ATCC 17699 / DSM 428 / KCTC 22496 / NCIMB 10442 / H16 / Stanier 337) (Ralstonia eutropha).